The chain runs to 316 residues: Cobalamin biosynthesis protein CobD (316 aa).

5 helical membrane-spanning segments follow: residues 45 to 65 (FSPY…ALGV), 78 to 100 (PVLY…SLAF), 151 to 171 (DGVI…AMTY), 209 to 229 (LTWL…KGAL), and 291 to 311 (ISLL…FYLV).

The protein belongs to the CobD/CbiB family.

The protein resides in the cell membrane. Its pathway is cofactor biosynthesis; adenosylcobalamin biosynthesis. In terms of biological role, converts cobyric acid to cobinamide by the addition of aminopropanol on the F carboxylic group. This is Cobalamin biosynthesis protein CobD from Streptococcus sanguinis (strain SK36).